Reading from the N-terminus, the 430-residue chain is MKTSKEITINKKNKFGAEILCIGSEILLGNIVNTNSQWIAEQLAILGIPHFRQTVIGDNPARLEEAILEASNRSEILITTGGLGPTPDDITTKVIADTFKTPLEQRNDILIDLRNKSKDKDSKLSDSQKKQSLVPKGAKIINNYSGTAPGIYWSPKENFTILTFPGVPSELKEMWAKEASKLLISNNLSKEVISSKVLHFAGISESLLADKIPHLLISKNPTVATYARTGEVKVRITAKGENSEETNRLIEPIKKELTQITGLKCFGIDNETLEEIVFKLLLKRKETIAVAESCTGGGIGSKLTKIPGSSKIFHGGVIAYNNSIKQRLLGVPEEIINTHGAVSKPVVESMARGVQIKFKVNWAISVSGIAGPTGGSKSKPVGLVNFCIKGPKTLITWEENFGSNKTREDIQKLSVLNALDRLRLSIIMAN.

It belongs to the CinA family.

This chain is CinA-like protein, found in Prochlorococcus marinus (strain NATL1A).